The chain runs to 173 residues: 2-C-methyl-D-erythritol 2,4-cyclodiphosphate synthase (173 aa).

A divalent metal cation is bound by residues Asp-17 and His-19. 4-CDP-2-C-methyl-D-erythritol 2-phosphate is bound by residues 17–19 (DVH) and 49–50 (HS). His-57 provides a ligand contact to a divalent metal cation. 4-CDP-2-C-methyl-D-erythritol 2-phosphate-binding positions include 76 to 80 (FPNTD), 147 to 150 (TTTE), Phe-154, and Arg-157.

Belongs to the IspF family. As to quaternary structure, homotrimer. A divalent metal cation serves as cofactor.

It carries out the reaction 4-CDP-2-C-methyl-D-erythritol 2-phosphate = 2-C-methyl-D-erythritol 2,4-cyclic diphosphate + CMP. It functions in the pathway isoprenoid biosynthesis; isopentenyl diphosphate biosynthesis via DXP pathway; isopentenyl diphosphate from 1-deoxy-D-xylulose 5-phosphate: step 4/6. Its function is as follows. Involved in the biosynthesis of isopentenyl diphosphate (IPP) and dimethylallyl diphosphate (DMAPP), two major building blocks of isoprenoid compounds. Catalyzes the conversion of 4-diphosphocytidyl-2-C-methyl-D-erythritol 2-phosphate (CDP-ME2P) to 2-C-methyl-D-erythritol 2,4-cyclodiphosphate (ME-CPP) with a corresponding release of cytidine 5-monophosphate (CMP). The polypeptide is 2-C-methyl-D-erythritol 2,4-cyclodiphosphate synthase (Ehrlichia canis (strain Jake)).